The primary structure comprises 596 residues: Heat shock factor protein 5 (596 aa).

A DNA-binding region spans residues 10–200; it reads NPNNFPAKLW…FHRSFRRDSL (191 aa). Positions 541-576 are disordered; it reads EMGPASKPSEDTGLATPARYREHRSNSQQGKSPDLH. Position 572 is a phosphoserine (Ser-572).

This sequence belongs to the HSF family. Homooligomer.

Its subcellular location is the nucleus. It is found in the chromosome. DNA-binding transcription factor that is essential for male fertility, spermatogenesis and meiotic prophase progression in spermatocytes under non-stress conditions. Positvely and negatively regulates gene expression to ensure progression of meiotic prophase beyond pachytene stage in spermatocytes. Plays a role in male germline meiotic sex chromosome remodeling and silencing through regulation of SMARCA4. The protein is Heat shock factor protein 5 (HSF5) of Homo sapiens (Human).